Here is a 42-residue protein sequence, read N- to C-terminus: Serine/threonine-protein phosphatase 5 (42 aa).

The segment at 38 to 42 is required for autoinhibition; sequence QLGVM.

Belongs to the PPP phosphatase family. PP-5 (PP-T) subfamily. In terms of assembly, probably forms a complex composed of chaperones HSP90 and HSP70, co-chaperones STIP1/HOP, CDC37, PPP5C, PTGES3/p23, TSC1 and client protein TSC2. Probably forms a complex composed of chaperones HSP90 and HSP70, co-chaperones CDC37, PPP5C, TSC1 and client protein TSC2, CDK4, AKT, RAF1 and NR3C1; this complex does not contain co-chaperones STIP1/HOP and PTGES3/p23. Part of a complex with HSP90/HSP90AA1 and steroid receptors. Interacts (via TPR repeats) with HSP90AA1 (via TPR repeat-binding motif) or HSPA1A/HSPA1B; the interaction is direct and activates the phosphatase activity. Dissociates from HSPA1A/HSPA1B and HSP90AA1 in response to arachidonic acid. Interacts with CPNE1 (via VWFA domain). Interacts with CDC16, CDC27. Interacts with KLHDC10 (via the 6 Kelch repeats); inhibits the phosphatase activity on MAP3K5. Interacts with ATM and ATR; both interactions are induced by DNA damage and enhance ATM and ATR kinase activity. Interacts with RAD17; reduced by DNA damage. Interacts with nuclear receptors such as NR3C1/GCR and PPARG (activated by agonist); regulates their transactivation activities. Interacts (via TPR repeats) with S100 proteins S100A1, S100A2, S100A6, S100B and S100P; the interactions are calcium-dependent, strongly activate PPP5C phosphatase activity and compete with HSP90AA1 and MAP3K5 interactions. Interacts with SMAD2 and SMAD3 but not with SMAD1; decreases SMAD3 phosphorylation and protein levels. Interacts (via TPR repeats) with CRY1 and CRY2; the interaction with CRY2 down-regulates the phosphatase activity on CSNK1E. Interacts (via TPR repeats) with the active form of RAC1, GNA12 or GNA13; these interactions activate the phosphatase activity and translocate PPP5C to the cell membrane. Interacts with FLCN. It depends on Mg(2+) as a cofactor. Mn(2+) serves as cofactor. In terms of processing, activated by at least two different proteolytic cleavages producing a 56 kDa and a 50 kDa form.

The protein localises to the nucleus. Its subcellular location is the cytoplasm. It localises to the cell membrane. The enzyme catalyses O-phospho-L-seryl-[protein] + H2O = L-seryl-[protein] + phosphate. The catalysed reaction is O-phospho-L-threonyl-[protein] + H2O = L-threonyl-[protein] + phosphate. With respect to regulation, autoinhibited. In the autoinhibited state, the TPR domain interacts with the catalytic region and prevents substrate access to the catalytic pocket. Allosterically activated by various polyunsaturated fatty acids, free long-chain fatty-acids and long-chain fatty acyl-CoA esters, arachidonic acid being the most effective activator. HSP90A and probably RAC1, GNA12 and GNA13 can also release the autoinhibition by the TPR repeat. Activation by RAC1, GNA12 and GNA13 is synergistic with the one produced by fatty acids binding. Inhibited by okadaic acid. Functionally, serine/threonine-protein phosphatase that dephosphorylates a myriad of proteins involved in different signaling pathways including the kinases CSNK1E, ASK1/MAP3K5, PRKDC and RAF1, the nuclear receptors NR3C1, PPARG, ESR1 and ESR2, SMAD proteins and TAU/MAPT. Implicated in wide ranging cellular processes, including apoptosis, differentiation, DNA damage response, cell survival, regulation of ion channels or circadian rhythms, in response to steroid and thyroid hormones, calcium, fatty acids, TGF-beta as well as oxidative and genotoxic stresses. Participates in the control of DNA damage response mechanisms such as checkpoint activation and DNA damage repair through, for instance, the regulation ATM/ATR-signaling and dephosphorylation of PRKDC and TP53BP1. Inhibits ASK1/MAP3K5-mediated apoptosis induced by oxidative stress. Plays a positive role in adipogenesis, mainly through the dephosphorylation and activation of PPARG transactivation function. Also dephosphorylates and inhibits the anti-adipogenic effect of NR3C1. Regulates the circadian rhythms, through the dephosphorylation and activation of CSNK1E. May modulate TGF-beta signaling pathway by the regulation of SMAD3 phosphorylation and protein expression levels. Dephosphorylates and may play a role in the regulation of TAU/MAPT. Through their dephosphorylation, may play a role in the regulation of ions channels such as KCNH2. Dephosphorylate FNIP1, disrupting interaction with HSP90AA1/Hsp90. In Oryctolagus cuniculus (Rabbit), this protein is Serine/threonine-protein phosphatase 5 (PPP5C).